A 340-amino-acid polypeptide reads, in one-letter code: Selenide, water dikinase (340 aa).

Cysteine 13 is an active-site residue. ATP-binding positions include lysine 16 and 43 to 45; that span reads ASD. Mg(2+) is bound at residue aspartate 46. ATP-binding positions include aspartate 63, aspartate 86, and 133 to 135; that span reads GHS. Aspartate 86 serves as a coordination point for Mg(2+). Aspartate 221 lines the Mg(2+) pocket.

It belongs to the selenophosphate synthase 1 family. Class I subfamily. As to quaternary structure, homodimer. Mg(2+) is required as a cofactor.

It carries out the reaction hydrogenselenide + ATP + H2O = selenophosphate + AMP + phosphate + 2 H(+). Its function is as follows. Synthesizes selenophosphate from selenide and ATP. This Desulfitobacterium hafniense (strain DSM 10664 / DCB-2) protein is Selenide, water dikinase.